A 60-amino-acid polypeptide reads, in one-letter code: Small integral membrane protein 3 (60 aa).

Residues 20–40 (IWVIVLIILATIVIMTSLLLC) form a helical membrane-spanning segment.

The protein resides in the membrane. The polypeptide is Small integral membrane protein 3 (SMIM3) (Homo sapiens (Human)).